A 1187-amino-acid chain; its full sequence is Serine/threonine-protein kinase SIK3 homolog (1187 aa).

The span at 1-15 (MAAVSSGAAAAAGIP) shows a compositional bias: low complexity. The disordered stretch occupies residues 1 to 41 (MAAVSSGAAAAAGIPNPNPNRERPQQQQQQQPASAALHPVA). The region spanning 59–310 (YEMERTIGKG…MEQICKNKWM (252 aa)) is the Protein kinase domain. Residues 65 to 73 (IGKGNFAVV) and Lys88 each bind ATP. Catalysis depends on Asp181, which acts as the Proton acceptor. Thr214 carries the phosphothreonine modification. Position 218 is a phosphoserine (Ser218). Positions 337–377 (LINEQVLMAMAEMGFDRERTLQSLHADSYDHYSATYSLLSD) constitute a UBA domain. 3 disordered regions span residues 548–587 (LKRP…VQRS), 697–776 (IQPS…PPGS), and 1060–1092 (CADA…GALQ). Residues 570-581 (VDEEGSDAEPDP) show a composition bias toward acidic residues. The span at 739–749 (VQYQHGSALYQ) shows a compositional bias: polar residues.

The protein belongs to the protein kinase superfamily. CAMK Ser/Thr protein kinase family. SNF1 subfamily. It depends on Mg(2+) as a cofactor.

The catalysed reaction is L-seryl-[protein] + ATP = O-phospho-L-seryl-[protein] + ADP + H(+). It carries out the reaction L-threonyl-[protein] + ATP = O-phospho-L-threonyl-[protein] + ADP + H(+). This is Serine/threonine-protein kinase SIK3 homolog from Danio rerio (Zebrafish).